The primary structure comprises 100 residues: Aspartyl/glutamyl-tRNA(Asn/Gln) amidotransferase subunit C (100 aa).

The protein belongs to the GatC family. In terms of assembly, heterotrimer of A, B and C subunits.

The enzyme catalyses L-glutamyl-tRNA(Gln) + L-glutamine + ATP + H2O = L-glutaminyl-tRNA(Gln) + L-glutamate + ADP + phosphate + H(+). It carries out the reaction L-aspartyl-tRNA(Asn) + L-glutamine + ATP + H2O = L-asparaginyl-tRNA(Asn) + L-glutamate + ADP + phosphate + 2 H(+). Allows the formation of correctly charged Asn-tRNA(Asn) or Gln-tRNA(Gln) through the transamidation of misacylated Asp-tRNA(Asn) or Glu-tRNA(Gln) in organisms which lack either or both of asparaginyl-tRNA or glutaminyl-tRNA synthetases. The reaction takes place in the presence of glutamine and ATP through an activated phospho-Asp-tRNA(Asn) or phospho-Glu-tRNA(Gln). The polypeptide is Aspartyl/glutamyl-tRNA(Asn/Gln) amidotransferase subunit C (Streptococcus pneumoniae (strain Hungary19A-6)).